A 1414-amino-acid polypeptide reads, in one-letter code: DNA-directed RNA polymerase subunit beta' (1414 aa).

The Zn(2+) site is built by Cys-70, Cys-72, Cys-85, and Cys-88. The Mg(2+) site is built by Asp-460, Asp-462, and Asp-464. Zn(2+) contacts are provided by Cys-814, Cys-888, Cys-895, and Cys-898. Low complexity predominate over residues 1392-1403 (EQALSEALKSSA). A disordered region spans residues 1392–1414 (EQALSEALKSSAPQEAKAAQKDE).

This sequence belongs to the RNA polymerase beta' chain family. In terms of assembly, the RNAP catalytic core consists of 2 alpha, 1 beta, 1 beta' and 1 omega subunit. When a sigma factor is associated with the core the holoenzyme is formed, which can initiate transcription. Mg(2+) serves as cofactor. Requires Zn(2+) as cofactor.

The catalysed reaction is RNA(n) + a ribonucleoside 5'-triphosphate = RNA(n+1) + diphosphate. DNA-dependent RNA polymerase catalyzes the transcription of DNA into RNA using the four ribonucleoside triphosphates as substrates. This is DNA-directed RNA polymerase subunit beta' from Coxiella burnetii (strain RSA 331 / Henzerling II).